The sequence spans 578 residues: Isocitrate dehydrogenase kinase/phosphatase (578 aa).

ATP is bound by residues 315-321 (APGIRGM) and Lys-336. The active site involves Asp-371.

The protein belongs to the AceK family.

It is found in the cytoplasm. It carries out the reaction L-seryl-[isocitrate dehydrogenase] + ATP = O-phospho-L-seryl-[isocitrate dehydrogenase] + ADP + H(+). Its function is as follows. Bifunctional enzyme which can phosphorylate or dephosphorylate isocitrate dehydrogenase (IDH) on a specific serine residue. This is a regulatory mechanism which enables bacteria to bypass the Krebs cycle via the glyoxylate shunt in response to the source of carbon. When bacteria are grown on glucose, IDH is fully active and unphosphorylated, but when grown on acetate or ethanol, the activity of IDH declines drastically concomitant with its phosphorylation. The chain is Isocitrate dehydrogenase kinase/phosphatase from Shigella boydii serotype 18 (strain CDC 3083-94 / BS512).